Reading from the N-terminus, the 66-residue chain is Large ribosomal subunit protein uL29 (66 aa).

Belongs to the universal ribosomal protein uL29 family.

In Syntrophobacter fumaroxidans (strain DSM 10017 / MPOB), this protein is Large ribosomal subunit protein uL29.